A 160-amino-acid chain; its full sequence is Ribonuclease H (160 aa).

The RNase H type-1 domain maps to 1 to 157 (MNIEIYTDGA…CDRLAVEACQ (157 aa)). The Mg(2+) site is built by D8, E49, D85, and D149.

Belongs to the RNase H family. As to quaternary structure, monomer. Requires Mg(2+) as cofactor.

Its subcellular location is the cytoplasm. The enzyme catalyses Endonucleolytic cleavage to 5'-phosphomonoester.. In terms of biological role, endonuclease that specifically degrades the RNA of RNA-DNA hybrids. This Treponema denticola (strain ATCC 35405 / DSM 14222 / CIP 103919 / JCM 8153 / KCTC 15104) protein is Ribonuclease H.